The primary structure comprises 702 residues: SAGA complex subunit NGG1 (702 aa).

The segment covering Met-1–Leu-10 has biased composition (basic residues). 2 disordered regions span residues Met-1–Leu-29 and Leu-90–Pro-224. Basic and acidic residues-rich tracts occupy residues Pro-11–Gly-22 and Leu-90–Glu-108. Polar residues predominate over residues Thr-109–Thr-125. At Ser-134 the chain carries Phosphoserine. Positions Met-162–Pro-219 are enriched in basic and acidic residues. Position 407 is a phosphoserine (Ser-407). Position 464 is a phosphothreonine (Thr-464). The Nuclear localization signal signature appears at Lys-606–His-618. Disordered stretches follow at residues Pro-611–Gln-636 and Asn-672–Asn-702. Over residues Ala-620–Gln-636 the composition is skewed to polar residues. Residues Asp-680–Asp-689 show a composition bias toward acidic residues.

It belongs to the NGG1 family. As to quaternary structure, component of the 1.8 MDa SAGA (Spt-Ada-Gcn5 acetyltransferase) complex, which is composed of 19 subunits TRA1, SPT7, TAF5, NGG1/ADA3, SGF73, SPT20/ADA5, SPT8, TAF12, TAF6, HFI1/ADA1, UBP8, GCN5, ADA2, SPT3, SGF29, TAF10, TAF9, SGF11 and SUS1. The SAGA complex is composed of 4 modules, namely the HAT (histone acetyltransferase) module (GCN5, ADA2, NGG1/ADA3 and SGF29), the DUB (deubiquitinating) module (UBP8, SGF11, SGF73 and SUS1), the core or TAF (TBP-associated factor) module (TAF5, TAF6, TAF9, TAF10 and TAF12), and the Tra1 or SPT (Suppressor of Ty) module (TRA1, HFI1/ADA1, SPT3, SPT7, SPT8 and SPT20/ADA5). The Tra1/SPT module binds activators, the core module recruits TBP (TATA-binding protein), the HAT module contains the histone H3 acetyltransferase GCN5, and the DUB module comprises the histone H2B deubiquitinase UBP8. Also identified in an altered form of SAGA, named SALSA (SAGA altered, Spt8 absent) or SLIK (SAGA-like) complex, which contains a C-terminal truncated form of SPT7 and is missing SPT8. However, it has been shown that the SAGA and SAGA-like SALSA/SLIK transcriptional coactivators are structurally and biochemically equivalent. Component of the 0.8 MDa ADA complex, a HAT complex distinct from SAGA, which at least consists of ADA2, NGG1/ADA3, AHC1, AHC2, SGF29 and GCN5. Identified in an Ada.spt complex with SPT7 and TRA1. Component of an ADA/GCN5 complex that consists of HFI1/ADA1, ADA2, NGG1/ADA3, SPT20/ADA5 and GCN5 and probably is a subcomplex of SAGA.

The protein localises to the nucleus. In terms of biological role, component of the transcription coactivator SAGA complex. SAGA acts as a general cofactor required for essentially all RNA polymerase II transcription. At the promoters, SAGA is required for transcription pre-initiation complex (PIC) recruitment. It influences RNA polymerase II transcriptional activity through different activities such as TBP interaction (via core/TAF module) and promoter selectivity, interaction with transcription activators (via Tra1/SPT module), and chromatin modification through histone acetylation (via HAT module) and deubiquitination (via DUB module). SAGA preferentially acetylates histones H3 (to form H3K9ac, H3K14ac, H3K18ac and H3K23ac) and H2B and deubiquitinates histone H2B. SAGA interacts with DNA via upstream activating sequences (UASs). Also identified in a modified version of SAGA named SALSA or SLIK. The cleavage of SPT7 and the absence of the SPT8 subunit in SLIK neither drive any major conformational differences in its structure compared with SAGA, nor significantly affect HAT, DUB, or DNA-binding activities. Component of the ADA histone acetyltransferase complex, which preferentially acetylates nucleosomal histones H3 (to form H3K14ac and H3K18ac) and H2B. May be involved in response to DNA damage by genotoxic agents. This chain is SAGA complex subunit NGG1 (NGG1), found in Saccharomyces cerevisiae (strain ATCC 204508 / S288c) (Baker's yeast).